We begin with the raw amino-acid sequence, 304 residues long: Homoserine O-acetyltransferase (304 aa).

The Acyl-thioester intermediate role is filled by Cys142. Residues Lys163 and Ser192 each coordinate substrate. Catalysis depends on His235, which acts as the Proton acceptor. Residue Glu237 is part of the active site. Substrate is bound at residue Arg249.

This sequence belongs to the MetA family.

The protein localises to the cytoplasm. The catalysed reaction is L-homoserine + acetyl-CoA = O-acetyl-L-homoserine + CoA. It functions in the pathway amino-acid biosynthesis; L-methionine biosynthesis via de novo pathway; O-acetyl-L-homoserine from L-homoserine: step 1/1. Transfers an acetyl group from acetyl-CoA to L-homoserine, forming acetyl-L-homoserine. In Clostridium beijerinckii (strain ATCC 51743 / NCIMB 8052) (Clostridium acetobutylicum), this protein is Homoserine O-acetyltransferase.